We begin with the raw amino-acid sequence, 168 residues long: Photosystem I assembly protein Ycf3 (168 aa).

3 TPR repeats span residues 35 to 68 (AFTY…EMDP), 72 to 105 (SYIL…NPFL), and 120 to 153 (GEQA…TPGN).

The protein belongs to the Ycf3 family.

The protein localises to the plastid. The protein resides in the chloroplast thylakoid membrane. Essential for the assembly of the photosystem I (PSI) complex. May act as a chaperone-like factor to guide the assembly of the PSI subunits. This chain is Photosystem I assembly protein Ycf3, found in Pelargonium hortorum (Common geranium).